The primary structure comprises 699 residues: Autophagy-related protein 9 (699 aa).

Topologically, residues 1 to 98 (MSHEDRGGDY…KGFMCIFFND (98 aa)) are cytoplasmic. A helical membrane pass occupies residues 99 to 119 (LFELVSSLFVVLFFTFLVCFV). Over 120–139 (DYSKLFSEQMPPPALRESVN) the chain is Lumenal. N-linked (GlcNAc...) asparagine glycosylation occurs at Asn139. The chain crosses the membrane as a helical span at residues 140–160 (FSAPIPIWLMVFLVIFSLYWL). The Cytoplasmic portion of the chain corresponds to 161 to 299 (SKLFSFFSSI…KRLSRGLSRR (139 aa)). Residues 300 to 320 (FMTIGILGLFTTPFIFFFLLI) lie within the membrane without spanning it. Residues 321–385 (NFFFEYAEEL…ESFPSQMLST (65 aa)) are Cytoplasmic-facing. Residues 386-406 (IAKFISFLFGSVLAVFIVLGI) traverse the membrane as a helical segment. Topologically, residues 407-420 (VSDHFIMNYQIFDR) are lumenal. Residues 421-441 (TPIWYIGILGTIVAITRSLIV) form a helical membrane-spanning segment. Residues 442–487 (DENQVFQPAKHMARTVQNTHYLPMSWVGKTHTHKVRDEFLVLFEYR) are Cytoplasmic-facing. Residues 488-508 (IVDFVRDIFSVLFTPFILIFS) lie within the membrane without spanning it. Residues 509–699 (LPKSSQAIID…HKNDNFVNSI (191 aa)) lie on the Cytoplasmic side of the membrane. The span at 599 to 618 (IKNNNNNNNNNGSNNHIGNH) shows a compositional bias: low complexity. Residues 599–620 (IKNNNNNNNNNGSNNHIGNHSQ) form a disordered region.

The protein belongs to the ATG9 family. As to quaternary structure, homotrimer; forms a homotrimer with a central pore that forms a path between the two membrane leaflets.

It localises to the preautophagosomal structure membrane. The protein resides in the cytoplasmic vesicle membrane. It catalyses the reaction a 1,2-diacyl-sn-glycero-3-phosphocholine(in) = a 1,2-diacyl-sn-glycero-3-phosphocholine(out). It carries out the reaction a 1,2-diacyl-sn-glycero-3-phospho-L-serine(in) = a 1,2-diacyl-sn-glycero-3-phospho-L-serine(out). The catalysed reaction is a 1,2-diacyl-sn-glycero-3-phosphoethanolamine(in) = a 1,2-diacyl-sn-glycero-3-phosphoethanolamine(out). Phospholipid scramblase involved in autophagy by mediating autophagosomal membrane expansion. Cycles between the preautophagosomal structure/phagophore assembly site (PAS) and the cytoplasmic vesicle pool and supplies membrane for the growing autophagosome. Lipid scramblase activity plays a key role in preautophagosomal structure/phagophore assembly by distributing the phospholipids that arrive through ATG2 from the cytoplasmic to the luminal leaflet of the bilayer, thereby driving autophagosomal membrane expansion. Required for lipopolysaccharide (LPS)-enhanced bacterial clearance through the autophagic pathway. This Dictyostelium discoideum (Social amoeba) protein is Autophagy-related protein 9 (atg9).